Here is an 853-residue protein sequence, read N- to C-terminus: MSAIENFDAHTPMMQQYLKLKAQHPEILLFYRMGDFYELFYDDAKRASQLLDISLTKRGASAGEPIPMAGIPYHAVENYLAKLVNQGESVAICEQIGDPATSKGPVERKVVRIVTPGTISDEALLQERQDNLLAAIWQDSKGFGYATLDISSGRFRLSEPADRETMAAELQRTNPAELLYAEDFAEMSLIEGRRGLRRRPLWEFEIDTARQQLNLQFGTRDLVGFGVENAPRGLCAAGCLLQYAKDTQRTTLPHIRSITMEREQDSIIMDAATRRNLEITQNLAGGAENTLASVLDCTVTPMGSRMLKRWLHMPVRDTRVLLERQQTIGALQDFTAELQPVLRQVGDLERILARLALRTARPRDLARMRHAFQQLPELRALLENVDSAPVQALREKMGEFAELRDLLERAIIDTPPVLVRDGGVIAPGYNEELDEWRALADGATDYLERLEVRERERTGLDTLKVGFNAVHGYYIQISRGQSHLAPINYMRRQTLKNAERYIIPELKEYEDKVLTSKGKALALEKQLYEELFDLLLPHLEALQQSASALAELDVLVNLAERAYTLNYTCPTFIDKPGIRITEGRHPVVEQVLNEPFIANPLNLSPQRRMLIITGPNMGGKSTYMRQTALIALMAYIGSYVPAQKVEIGPIDRIFTRVGAADDLASGRSTFMVEMTETANILHNATEYSLVLMDEIGRGTSTYDGLSLAWACAENLANKIKALTLFATHYFELTQLPEKMEGVANVHLDALEHGDTIAFMHSVQDGAASKSYGLAVAALAGVPKEVIKRARQKLRELESISPNAAATQVDGTQMSLLSVQEETSPAVEALENLDPDSLTPRQALEWIYRLKSLV.

An ATP-binding site is contributed by 614–621 (GPNMGGKS).

It belongs to the DNA mismatch repair MutS family.

In terms of biological role, this protein is involved in the repair of mismatches in DNA. It is possible that it carries out the mismatch recognition step. This protein has a weak ATPase activity. The protein is DNA mismatch repair protein MutS of Escherichia coli O7:K1 (strain IAI39 / ExPEC).